Reading from the N-terminus, the 119-residue chain is Large ribosomal subunit protein uL24 (119 aa).

It belongs to the universal ribosomal protein uL24 family. As to quaternary structure, part of the 50S ribosomal subunit.

Its function is as follows. One of two assembly initiator proteins, it binds directly to the 5'-end of the 23S rRNA, where it nucleates assembly of the 50S subunit. Functionally, one of the proteins that surrounds the polypeptide exit tunnel on the outside of the subunit. This chain is Large ribosomal subunit protein uL24, found in Arthrobacter sp. (strain FB24).